A 108-amino-acid polypeptide reads, in one-letter code: UPF0060 membrane protein YnfA (108 aa).

Residues 1–5 (MLKTT) lie on the Periplasmic side of the membrane. The chain crosses the membrane as a helical span at residues 6 to 26 (LLFFVTALCEIIGCFLPWLWL). At 27-30 (KRGA) the chain is on the cytoplasmic side. A helical transmembrane segment spans residues 31–51 (SMWWLLPAAASLALFVWLLTL). At 52–60 (HPAASGRVY) the chain is on the periplasmic side. A helical membrane pass occupies residues 61 to 81 (AAYGGVYVCTALLWLRVVDGV). The Cytoplasmic segment spans residues 82–84 (RLT). A helical membrane pass occupies residues 85-105 (VYDWCGALIALCGMLIIVVGW). Residues 106-108 (GRT) lie on the Periplasmic side of the membrane.

Belongs to the UPF0060 family.

The protein resides in the cell inner membrane. The protein is UPF0060 membrane protein YnfA of Salmonella schwarzengrund (strain CVM19633).